Consider the following 354-residue polypeptide: DNA polymerase IV (354 aa).

The 182-residue stretch at 8–189 folds into the UmuC domain; that stretch reads IIHVDMDCFY…LPLEKIPGVG (182 aa). Residues Asp-12 and Asp-107 each coordinate Mg(2+). Glu-108 is a catalytic residue.

Belongs to the DNA polymerase type-Y family. Monomer. The cofactor is Mg(2+).

Its subcellular location is the cytoplasm. It carries out the reaction DNA(n) + a 2'-deoxyribonucleoside 5'-triphosphate = DNA(n+1) + diphosphate. In terms of biological role, poorly processive, error-prone DNA polymerase involved in untargeted mutagenesis. Copies undamaged DNA at stalled replication forks, which arise in vivo from mismatched or misaligned primer ends. These misaligned primers can be extended by PolIV. Exhibits no 3'-5' exonuclease (proofreading) activity. May be involved in translesional synthesis, in conjunction with the beta clamp from PolIII. This chain is DNA polymerase IV, found in Vibrio parahaemolyticus serotype O3:K6 (strain RIMD 2210633).